A 140-amino-acid chain; its full sequence is Sex-regulated protein janus-B (140 aa).

Arginine 42 lines the substrate pocket. Histidine 69 serves as the catalytic Proton acceptor. Position 110 to 112 (110 to 112) interacts with substrate; that stretch reads SRT.

This sequence belongs to the janus family.

In terms of biological role, janA and janB regulate somatic sex differentiation. This is Sex-regulated protein janus-B (janB) from Drosophila teissieri (Fruit fly).